Here is a 93-residue protein sequence, read N- to C-terminus: MGRSLKKGPFADAHLLKKIEAQADNDKKTVIRTWSRRSTIFPSFIGYTIAVYDGRKHVPVFVSEDMVGHKLGEFVPTRTFRGHNTDDKKTTAR.

The protein belongs to the universal ribosomal protein uS19 family.

Its function is as follows. Protein S19 forms a complex with S13 that binds strongly to the 16S ribosomal RNA. The polypeptide is Small ribosomal subunit protein uS19 (Lacticaseibacillus paracasei (strain ATCC 334 / BCRC 17002 / CCUG 31169 / CIP 107868 / KCTC 3260 / NRRL B-441) (Lactobacillus paracasei)).